The sequence spans 425 residues: Melibiose permease (425 aa).

Residues methionine 1–asparagine 13 lie on the Cytoplasmic side of the membrane. Residues phenylalanine 14–phenylalanine 34 traverse the membrane as a helical segment. The Periplasmic portion of the chain corresponds to leucine 35–threonine 50. The chain crosses the membrane as a helical span at residues glycine 51–isoleucine 71. Over serine 72 to histidine 80 the chain is Cytoplasmic. Residues leucine 81–alanine 101 traverse the membrane as a helical segment. Residues proline 102–asparagine 107 are Periplasmic-facing. Residues isoleucine 108 to glycine 128 form a helical membrane-spanning segment. Over alanine 129 to arginine 149 the chain is Cytoplasmic. Residues methionine 150–aspartate 170 traverse the membrane as a helical segment. Residue proline 171 is a topological domain, periplasmic. Residues serine 172–alanine 192 traverse the membrane as a helical segment. At lysine 193–methionine 227 the chain is on the cytoplasmic side. A helical transmembrane segment spans residues tryptophan 228–phenylalanine 248. At alanine 249–glycine 267 the chain is on the periplasmic side. Residues phenylalanine 268 to isoleucine 288 form a helical membrane-spanning segment. Residues asparagine 289 to leucine 297 lie on the Cytoplasmic side of the membrane. A helical transmembrane segment spans residues leucine 298–valine 318. Residues glutamate 319–methionine 325 lie on the Periplasmic side of the membrane. Residues leucine 326–phenylalanine 346 form a helical membrane-spanning segment. Topologically, residues aspartate 347–threonine 353 are cytoplasmic. A helical transmembrane segment spans residues isoleucine 354–alanine 374. Residues glycine 375–glutamate 385 lie on the Periplasmic side of the membrane. Residues threonine 386–serine 406 form a helical membrane-spanning segment. The Cytoplasmic segment spans residues serine 407–arginine 425.

Belongs to the major facilitator superfamily. Oligosaccharide:H(+) symporter (OHS) (TC 2.A.1.5) family.

It is found in the cell inner membrane. Responsible for transport of melibiose into the cell, with the concomitant import of a proton (symport system). Can also transport lactose, and has weak activity with maltose. Cannot transport the analog methyl-1-thio-beta,D-galactopyranoside (TMG). The chain is Melibiose permease from Enterobacter cloacae subsp. cloacae (strain ATCC 13047 / DSM 30054 / NBRC 13535 / NCTC 10005 / WDCM 00083 / NCDC 279-56).